Here is a 273-residue protein sequence, read N- to C-terminus: MPELPEVETSLRGVEPYLHGKIIKQIVVRTQKLRWAISDELQHMQGAKIVALSRRAKYLILHTTQGDILIHLGMSGSLGILQENQQPAGKHDHVDLITQDGTVLRYNDPRKFGCWLWTKNAEQHELITRLGPEPLSESFTAAYLFARSRNKTVAVKNFIMNNDIVVGVGNIYACESLFMAGLHPELAAQNLTEKQCERLVKVIKEVLAKAIIQGGTTLKDFIQPDGKPGYFAQVLQVYGRKDEACNDCGTIIEAKVIGQRNSYFCPHCQMLPR.

The Schiff-base intermediate with DNA role is filled by P2. Catalysis depends on E3, which acts as the Proton donor. The Proton donor; for beta-elimination activity role is filled by K57. DNA-binding residues include H91, R110, and K151. The FPG-type zinc finger occupies 236 to 270; it reads QVYGRKDEACNDCGTIIEAKVIGQRNSYFCPHCQM. Residue R260 is the Proton donor; for delta-elimination activity of the active site.

This sequence belongs to the FPG family. As to quaternary structure, monomer. It depends on Zn(2+) as a cofactor.

The catalysed reaction is Hydrolysis of DNA containing ring-opened 7-methylguanine residues, releasing 2,6-diamino-4-hydroxy-5-(N-methyl)formamidopyrimidine.. The enzyme catalyses 2'-deoxyribonucleotide-(2'-deoxyribose 5'-phosphate)-2'-deoxyribonucleotide-DNA = a 3'-end 2'-deoxyribonucleotide-(2,3-dehydro-2,3-deoxyribose 5'-phosphate)-DNA + a 5'-end 5'-phospho-2'-deoxyribonucleoside-DNA + H(+). Involved in base excision repair of DNA damaged by oxidation or by mutagenic agents. Acts as a DNA glycosylase that recognizes and removes damaged bases. Has a preference for oxidized purines, such as 7,8-dihydro-8-oxoguanine (8-oxoG). Has AP (apurinic/apyrimidinic) lyase activity and introduces nicks in the DNA strand. Cleaves the DNA backbone by beta-delta elimination to generate a single-strand break at the site of the removed base with both 3'- and 5'-phosphates. This chain is Formamidopyrimidine-DNA glycosylase, found in Actinobacillus pleuropneumoniae serotype 3 (strain JL03).